We begin with the raw amino-acid sequence, 234 residues long: Isoprenyl transferase (234 aa).

Aspartate 13 is an active-site residue. Aspartate 13 contributes to the Mg(2+) binding site. Residues 14–17 (GNGR), tryptophan 18, arginine 26, histidine 30, and 58–60 (STE) contribute to the substrate site. Asparagine 61 (proton acceptor) is an active-site residue. Residues tryptophan 62, arginine 64, arginine 180, and 186–188 (RLS) contribute to the substrate site. A Mg(2+)-binding site is contributed by glutamate 199.

Belongs to the UPP synthase family. As to quaternary structure, homodimer. Mg(2+) serves as cofactor.

Catalyzes the condensation of isopentenyl diphosphate (IPP) with allylic pyrophosphates generating different type of terpenoids. The chain is Isoprenyl transferase from Helicobacter pylori (strain J99 / ATCC 700824) (Campylobacter pylori J99).